We begin with the raw amino-acid sequence, 878 residues long: E3 ubiquitin-protein ligase BRE1-like 1 (878 aa).

Residues 1 to 21 (MASTGEPDRKRRHFSSISPSE) are disordered. Coiled-coil stretches lie at residues 48–76 (QNLKLSQKLEAQQVECSILEDKLSQIKEK), 200–261 (QLAL…ELQQ), 293–382 (SDRE…EKLQ), and 537–624 (LDMY…ILKS). The RING-type zinc finger occupies 826–865 (CKACNDRPKEVVITKCYHLFCNPCVQKLTGTRQKKCPTCS).

It belongs to the BRE1 family. In terms of assembly, may act as a tetramer consisting of two copies of HUB1 and two copies of HUB2. Interacts with MED21. Ubiquitously expressed.

It localises to the nucleus. The enzyme catalyses S-ubiquitinyl-[E2 ubiquitin-conjugating enzyme]-L-cysteine + [acceptor protein]-L-lysine = [E2 ubiquitin-conjugating enzyme]-L-cysteine + N(6)-ubiquitinyl-[acceptor protein]-L-lysine.. It participates in protein modification; protein ubiquitination. Its function is as follows. E3 ubiquitin-protein ligase that monoubiquitinates H2B to form H2BK143ub1. H2BK143ub1 gives a specific tag for epigenetic transcriptional activation and is also prerequisite for H3K4me and maybe H3K79me. It thereby plays a central role in histone code and gene regulation. Forms a ubiquitin ligase complex in cooperation with the E2 enzyme UBC2/RAD6. Required for the regulation of flowering time and defense against necrotrophic fungal pathogens. Involved in the control of seed dormancy and germination. This chain is E3 ubiquitin-protein ligase BRE1-like 1 (HUB1), found in Arabidopsis thaliana (Mouse-ear cress).